We begin with the raw amino-acid sequence, 206 residues long: Ribosomal RNA small subunit methyltransferase G (206 aa).

Residues G73, L78, 124–125 (VE), and R139 each bind S-adenosyl-L-methionine.

Belongs to the methyltransferase superfamily. RNA methyltransferase RsmG family.

It is found in the cytoplasm. The enzyme catalyses guanosine(527) in 16S rRNA + S-adenosyl-L-methionine = N(7)-methylguanosine(527) in 16S rRNA + S-adenosyl-L-homocysteine. In terms of biological role, specifically methylates the N7 position of guanine in position 527 of 16S rRNA. The polypeptide is Ribosomal RNA small subunit methyltransferase G (Yersinia enterocolitica serotype O:8 / biotype 1B (strain NCTC 13174 / 8081)).